The chain runs to 262 residues: Tryptophan synthase alpha chain (262 aa).

Residues glutamate 48 and aspartate 59 each act as proton acceptor in the active site.

The protein belongs to the TrpA family. As to quaternary structure, tetramer of two alpha and two beta chains.

The catalysed reaction is (1S,2R)-1-C-(indol-3-yl)glycerol 3-phosphate + L-serine = D-glyceraldehyde 3-phosphate + L-tryptophan + H2O. It functions in the pathway amino-acid biosynthesis; L-tryptophan biosynthesis; L-tryptophan from chorismate: step 5/5. In terms of biological role, the alpha subunit is responsible for the aldol cleavage of indoleglycerol phosphate to indole and glyceraldehyde 3-phosphate. This Helicobacter pylori (strain P12) protein is Tryptophan synthase alpha chain.